A 476-amino-acid chain; its full sequence is Ribulose bisphosphate carboxylase large chain (476 aa).

A propeptide spanning residues 1-2 (MS) is cleaved from the precursor. Pro3 is modified (N-acetylproline). Lys14 carries the post-translational modification N6,N6,N6-trimethyllysine. Substrate contacts are provided by Asn123 and Thr173. Lys175 acts as the Proton acceptor in catalysis. Residue Lys177 participates in substrate binding. Mg(2+) is bound by residues Lys201, Asp203, and Glu204. An N6-carboxylysine modification is found at Lys201. Catalysis depends on His294, which acts as the Proton acceptor. Arg295, His327, and Ser379 together coordinate substrate.

This sequence belongs to the RuBisCO large chain family. Type I subfamily. As to quaternary structure, heterohexadecamer of 8 large chains and 8 small chains; disulfide-linked. The disulfide link is formed within the large subunit homodimers. Mg(2+) serves as cofactor. In terms of processing, the disulfide bond which can form in the large chain dimeric partners within the hexadecamer appears to be associated with oxidative stress and protein turnover.

Its subcellular location is the plastid. The protein resides in the chloroplast. The catalysed reaction is 2 (2R)-3-phosphoglycerate + 2 H(+) = D-ribulose 1,5-bisphosphate + CO2 + H2O. It carries out the reaction D-ribulose 1,5-bisphosphate + O2 = 2-phosphoglycolate + (2R)-3-phosphoglycerate + 2 H(+). In terms of biological role, ruBisCO catalyzes two reactions: the carboxylation of D-ribulose 1,5-bisphosphate, the primary event in carbon dioxide fixation, as well as the oxidative fragmentation of the pentose substrate in the photorespiration process. Both reactions occur simultaneously and in competition at the same active site. The chain is Ribulose bisphosphate carboxylase large chain from Zea mays (Maize).